A 121-amino-acid polypeptide reads, in one-letter code: Small ribosomal subunit protein uS13 (121 aa).

Residues 96-121 form a disordered region; that stretch reads PVRGQNTKNNARTRKGKAVAIAGKKK. The segment covering 106–121 has biased composition (basic residues); that stretch reads ARTRKGKAVAIAGKKK.

Belongs to the universal ribosomal protein uS13 family. In terms of assembly, part of the 30S ribosomal subunit. Forms a loose heterodimer with protein S19. Forms two bridges to the 50S subunit in the 70S ribosome.

Located at the top of the head of the 30S subunit, it contacts several helices of the 16S rRNA. In the 70S ribosome it contacts the 23S rRNA (bridge B1a) and protein L5 of the 50S subunit (bridge B1b), connecting the 2 subunits; these bridges are implicated in subunit movement. Contacts the tRNAs in the A and P-sites. The sequence is that of Small ribosomal subunit protein uS13 from Streptococcus gordonii (strain Challis / ATCC 35105 / BCRC 15272 / CH1 / DL1 / V288).